Here is a 164-residue protein sequence, read N- to C-terminus: Crossover junction endodeoxyribonuclease RuvC (164 aa).

Catalysis depends on residues Asp7, Glu67, and Asp140. Positions 7, 67, and 140 each coordinate Mg(2+).

The protein belongs to the RuvC family. In terms of assembly, homodimer which binds Holliday junction (HJ) DNA. The HJ becomes 2-fold symmetrical on binding to RuvC with unstacked arms; it has a different conformation from HJ DNA in complex with RuvA. In the full resolvosome a probable DNA-RuvA(4)-RuvB(12)-RuvC(2) complex forms which resolves the HJ. Mg(2+) is required as a cofactor.

Its subcellular location is the cytoplasm. The catalysed reaction is Endonucleolytic cleavage at a junction such as a reciprocal single-stranded crossover between two homologous DNA duplexes (Holliday junction).. Functionally, the RuvA-RuvB-RuvC complex processes Holliday junction (HJ) DNA during genetic recombination and DNA repair. Endonuclease that resolves HJ intermediates. Cleaves cruciform DNA by making single-stranded nicks across the HJ at symmetrical positions within the homologous arms, yielding a 5'-phosphate and a 3'-hydroxyl group; requires a central core of homology in the junction. The consensus cleavage sequence is 5'-(A/T)TT(C/G)-3'. Cleavage occurs on the 3'-side of the TT dinucleotide at the point of strand exchange. HJ branch migration catalyzed by RuvA-RuvB allows RuvC to scan DNA until it finds its consensus sequence, where it cleaves and resolves the cruciform DNA. The protein is Crossover junction endodeoxyribonuclease RuvC of Alkaliphilus metalliredigens (strain QYMF).